Here is a 757-residue protein sequence, read N- to C-terminus: Inhibitor of nuclear factor kappa-B kinase subunit beta (757 aa).

One can recognise a Protein kinase domain in the interval tryptophan 15–phenylalanine 300. Residues leucine 21–valine 29 and lysine 44 each bind ATP. The active-site Proton acceptor is the aspartate 145. A Glycyl lysine isopeptide (Lys-Gly) (interchain with G-Cter in ubiquitin) cross-link involves residue lysine 163. Phosphoserine; by TBK1 and PKC/PRKCZ is present on serine 177. At cysteine 179 the chain carries S-nitrosocysteine. Serine 181 is modified (phosphoserine; by TBK1, PKC/PRKCZ and PDPK1). Proline 191 bears the Hydroxyproline mark. Positions leucine 458–leucine 479 are leucine-zipper. The residue at position 670 (serine 670) is a Phosphoserine; by autocatalysis. Serine 672 is subject to Phosphoserine. A phosphoserine; by autocatalysis mark is found at serine 675, serine 682, serine 689, serine 692, serine 697, serine 705, serine 733, and serine 740. A disordered region spans residues serine 682–lysine 703. Residues leucine 737 to leucine 742 form an NEMO-binding region.

The protein belongs to the protein kinase superfamily. Ser/Thr protein kinase family. I-kappa-B kinase subfamily. Component of the I-kappa-B-kinase (IKK) core complex consisting of CHUK, IKBKB and IKBKG; probably four alpha/CHUK-beta/IKBKB dimers are associated with four gamma/IKBKG subunits. The IKK core complex seems to associate with regulatory or adapter proteins to form a IKK-signalosome holo-complex. The IKK complex associates with TERF2IP/RAP1, leading to promote IKK-mediated phosphorylation of RELA/p65. Part of a complex composed of NCOA2, NCOA3, CHUK/IKKA, IKBKB, IKBKG and CREBBP. Part of a 70-90 kDa complex at least consisting of CHUK/IKKA, IKBKB, NFKBIA, RELA, ELP1 and MAP3K14. Found in a membrane raft complex, at least composed of BCL10, CARD11, DPP4 and IKBKB. Interacts with SQSTM1 through PRKCZ or PRKCI. Forms an NGF-induced complex with IKBKB, PRKCI and TRAF6. May interact with MAVS/IPS1. Interacts with NALP2. Interacts with TICAM1. Interacts with FAF1; the interaction disrupts the IKK complex formation. Interacts with ATM. Part of a ternary complex consisting of TANK, IKBKB and IKBKG. Interacts with NIBP; the interaction is direct. Interacts with ARRB1 and ARRB2. Interacts with TRIM21. Interacts with NLRC5; prevents IKBKB phosphorylation and kinase activity. Interacts with PDPK1. Interacts with EIF2AK2/PKR. The phosphorylated form interacts with PPM1A and PPM1B. Interacts with ZNF268 isoform 2; the interaction is further increased in a TNF-alpha-dependent manner. Interacts with IKBKE. Interacts with ZC3H12A. Interacts with AKAP13. Interacts with LRRC14; disrupts IKBKB-IKBKG interaction preventing I-kappa-B-kinase (IKK) core complex formation and leading to a decrease of IKBKB phosphorylation and NF-kappaB activation. Interacts with SASH1. Interacts with ARFIP2. Interacts with FKBP5. Upon cytokine stimulation, phosphorylated on Ser-177 and Ser-181 by MEKK1 and/or MAP3K14/NIK as well as TBK1 and PRKCZ; which enhances activity. Phosphorylated by MAP3K7/TAK1 in response to NOD1 and NOD2 signaling, promoting activation and phosphorylation of NF-kappa-B inhibitors, leading to NF-kappa-B activation. Once activated, autophosphorylates on the C-terminal serine cluster; which decreases activity and prevents prolonged activation of the inflammatory response. Phosphorylated by the IKK-related kinases TBK1 and IKBKE, which is associated with reduced CHUK/IKKA and IKBKB activity and NF-kappa-B-dependent gene transcription. Dephosphorylated at Ser-177 and Ser-181 by PPM1A and PPM1B. In terms of processing, ubiquitinated. Monoubiquitination involves TRIM21 that leads to inhibition of Tax-induced NF-kappa-B signaling. 'Ser-163' may not serve as a monoubiquitination site. Ubiquitination on 'Ser-163' may modulate phosphorylation on C-terminal serine residues. Post-translationally, hydroxylated by PHD1/EGLN2, loss of hydroxylation under hypoxic conditions results in activation of NF-kappa-B.

It localises to the cytoplasm. It is found in the nucleus. The protein resides in the membrane raft. The enzyme catalyses L-seryl-[I-kappa-B protein] + ATP = O-phospho-L-seryl-[I-kappa-B protein] + ADP + H(+). It carries out the reaction L-seryl-[protein] + ATP = O-phospho-L-seryl-[protein] + ADP + H(+). The catalysed reaction is L-threonyl-[protein] + ATP = O-phospho-L-threonyl-[protein] + ADP + H(+). Its function is as follows. Serine kinase that plays an essential role in the NF-kappa-B signaling pathway which is activated by multiple stimuli such as inflammatory cytokines, bacterial or viral products, DNA damages or other cellular stresses. Acts as a part of the canonical IKK complex in the conventional pathway of NF-kappa-B activation. Phosphorylates inhibitors of NF-kappa-B on 2 critical serine residues. These modifications allow polyubiquitination of the inhibitors and subsequent degradation by the proteasome. In turn, free NF-kappa-B is translocated into the nucleus and activates the transcription of hundreds of genes involved in immune response, growth control, or protection against apoptosis. In addition to the NF-kappa-B inhibitors, phosphorylates several other components of the signaling pathway including NEMO/IKBKG, NF-kappa-B subunits RELA and NFKB1, as well as IKK-related kinases TBK1 and IKBKE. IKK-related kinase phosphorylations may prevent the overproduction of inflammatory mediators since they exert a negative regulation on canonical IKKs. Phosphorylates FOXO3, mediating the TNF-dependent inactivation of this pro-apoptotic transcription factor. Also phosphorylates other substrates including NAA10, NCOA3, BCL10 and IRS1. Phosphorylates RIPK1 at 'Ser-25' which represses its kinase activity and consequently prevents TNF-mediated RIPK1-dependent cell death. Phosphorylates the C-terminus of IRF5, stimulating IRF5 homodimerization and translocation into the nucleus. The sequence is that of Inhibitor of nuclear factor kappa-B kinase subunit beta (Ikbkb) from Rattus norvegicus (Rat).